We begin with the raw amino-acid sequence, 175 residues long: NADH-ubiquinone oxidoreductase chain 6 (175 aa).

The next 5 helical transmembrane spans lie at 1–21, 27–47, 49–69, 88–108, and 149–169; these read MMTY…VGFS, VYGG…VMNF, GSFL…VVFG, VVLG…LYVL, and YGVW…VVIM.

Belongs to the complex I subunit 6 family. As to quaternary structure, core subunit of respiratory chain NADH dehydrogenase (Complex I) which is composed of 45 different subunits.

The protein resides in the mitochondrion inner membrane. The enzyme catalyses a ubiquinone + NADH + 5 H(+)(in) = a ubiquinol + NAD(+) + 4 H(+)(out). Its function is as follows. Core subunit of the mitochondrial membrane respiratory chain NADH dehydrogenase (Complex I) which catalyzes electron transfer from NADH through the respiratory chain, using ubiquinone as an electron acceptor. Essential for the catalytic activity and assembly of complex I. The sequence is that of NADH-ubiquinone oxidoreductase chain 6 (MT-ND6) from Pteropus dasymallus (Ryukyu flying fox).